A 1070-amino-acid polypeptide reads, in one-letter code: [F-actin]-monooxygenase MICAL1 (1070 aa).

Residues 1-489 form a monooxygenase domain region; the sequence is MASTISTNPA…RDLYDMEAKE (489 aa). FAD is bound by residues C95, 114 to 116, 121 to 123, F181, Y293, and D393; these read EKR and RHN. T475 bears the Phosphothreonine mark. The region spanning 508 to 612 is the Calponin-homology (CH) domain; the sequence is VGSQEELLRW…YLSHFHSAFK (105 aa). Residues 643–690 are disordered; sequence QRTRTQENGEDAGGKKPRLEVKAETPSTEEPPVPKPDEPMTPPSQQQD. A compositionally biased stretch (basic and acidic residues) spans 646–665; sequence RTQENGEDAGGKKPRLEVKA. Over residues 671–684 the composition is skewed to pro residues; that stretch reads EEPPVPKPDEPMTP. The LIM zinc-binding domain occupies 695-757; that stretch reads DLCALCGQHL…LQHLPQTGHE (63 aa). Residues C697, C700, H718, C721, C724, C727, C747, and H750 each contribute to the Zn(2+) site. 2 disordered regions span residues 754–838 and 865–887; these read TGHE…RSCS and MEMG…EDVP. Positions 755–766 are enriched in basic and acidic residues; that stretch reads GHEEDSSDRGPE. Residues 770–781 show a composition bias toward polar residues; sequence LPMSSENNTPSG. Phosphoserine is present on residues S793, S875, and S876. The span at 876-887 shows a compositional bias: acidic residues; that stretch reads SEEETEEEEDVP. The tract at residues 904 to 1070 is important for interaction with RAB8A; that stretch reads GTMNNYPTWR…ELASEPGVQG (167 aa). Residues 921–1070 form the bMERB domain; sequence KEEEMKRFCK…ELASEPGVQG (150 aa). Residues 928–1030 adopt a coiled-coil conformation; it reads FCKAQAIQRR…EETLKTAADR (103 aa). S1060 bears the Phosphoserine mark.

The protein belongs to the Mical family. In terms of assembly, interacts with STK38 and STK38L. Associates with the SH3 domain of NEDD9. Interacts with VIM and PLXNA3. Interacts with RAB1B, RAB8A, RAB10, RAB13 and RAB15 (in their GTP-bound forms); binding to RAB1B is of low affinity compared to other Rab proteins; at least in case of RAB8A and RAB10 can bind 2 molecules of the Rab proteins simultaneously. Interacts with GRAF1/ARHGAP26, GRAF2/ARHGAP10, RAB8A, RAB8B and RAB10; may bind simultaneously to GRAFs and Rabs and connects GRAFs to Rabs. Does not interact with RAB1 and RAB11A. FAD is required as a cofactor.

It is found in the cytoplasm. The protein localises to the cytoskeleton. Its subcellular location is the endosome membrane. The protein resides in the midbody. The enzyme catalyses L-methionyl-[F-actin] + NADPH + O2 + H(+) = L-methionyl-(R)-S-oxide-[F-actin] + NADP(+) + H2O. The catalysed reaction is NADPH + O2 + H(+) = H2O2 + NADP(+). Its function is as follows. Monooxygenase that promotes depolymerization of F-actin by mediating oxidation of specific methionine residues on actin to form methionine-sulfoxide, resulting in actin filament disassembly and preventing repolymerization. In the absence of actin, it also functions as a NADPH oxidase producing H(2)O(2). Acts as a cytoskeletal regulator that connects NEDD9 to intermediate filaments. Also acts as a negative regulator of apoptosis via its interaction with STK38 and STK38L; acts by antagonizing STK38 and STK38L activation by MST1/STK4. Involved in regulation of lamina-specific connectivity in the nervous system such as the development of lamina-restricted hippocampal connections. Through redox regulation of the actin cytoskeleton controls the intracellular distribution of secretory vesicles containing L1/neurofascin/NgCAM family proteins in neurons, thereby regulating their cell surface levels. May act as Rab effector protein and play a role in vesicle trafficking. Promotes endosomal tubule extension by associating with RAB8 (RAB8A or RAB8B), RAB10 and GRAF (GRAF1/ARHGAP26 or GRAF2/ARHGAP10) on the endosomal membrane which may connect GRAFs to Rabs, thereby participating in neosynthesized Rab8-Rab10-Rab11-dependent protein export. This Bos taurus (Bovine) protein is [F-actin]-monooxygenase MICAL1 (MICAL1).